Consider the following 117-residue polypeptide: Large ribosomal subunit protein uL18 (117 aa).

This sequence belongs to the universal ribosomal protein uL18 family. As to quaternary structure, part of the 50S ribosomal subunit; part of the 5S rRNA/L5/L18/L25 subcomplex. Contacts the 5S and 23S rRNAs.

In terms of biological role, this is one of the proteins that bind and probably mediate the attachment of the 5S RNA into the large ribosomal subunit, where it forms part of the central protuberance. The sequence is that of Large ribosomal subunit protein uL18 from Vibrio campbellii (strain ATCC BAA-1116).